Here is a 295-residue protein sequence, read N- to C-terminus: Sulfotransferase 1A3 (295 aa).

48 to 53 (KSGTTW) provides a ligand contact to 3'-phosphoadenylyl sulfate. Residues Asp-86 and 106–108 (KSH) each bind dopamine. His-108 acts as the Proton acceptor in catalysis. 3'-phosphoadenylyl sulfate contacts are provided by Arg-130 and Ser-138. A dopamine-binding site is contributed by Glu-146. 3'-phosphoadenylyl sulfate-binding positions include Tyr-193, 227-232 (TSFKEM), and 257-259 (RKG).

This sequence belongs to the sulfotransferase 1 family. Homodimer. Post-translationally, the N-terminus is blocked. In terms of tissue distribution, liver, colon, kidney, lung, brain, spleen, small intestine, placenta and leukocyte.

The protein resides in the cytoplasm. It carries out the reaction a phenol + 3'-phosphoadenylyl sulfate = an aryl sulfate + adenosine 3',5'-bisphosphate + H(+). The enzyme catalyses 4-nitrophenol + 3'-phosphoadenylyl sulfate = 4-nitrophenyl sulfate + adenosine 3',5'-bisphosphate. The catalysed reaction is dopamine + 3'-phosphoadenylyl sulfate = dopamine 3-O-sulfate + adenosine 3',5'-bisphosphate + H(+). It catalyses the reaction dopamine + 3'-phosphoadenylyl sulfate = dopamine 4-O-sulfate + adenosine 3',5'-bisphosphate + H(+). It carries out the reaction serotonin + 3'-phosphoadenylyl sulfate = serotonin O-sulfate + adenosine 3',5'-bisphosphate + H(+). The enzyme catalyses (R)-adrenaline + 3'-phosphoadenylyl sulfate = (R)-adrenaline 4'-O-sulfate + adenosine 3',5'-bisphosphate + H(+). The catalysed reaction is (R)-noradrenaline + 3'-phosphoadenylyl sulfate = (R)-noradrenaline 4'-O-sulfate + adenosine 3',5'-bisphosphate + H(+). It catalyses the reaction 3,3',5-triiodo-L-thyronine + 3'-phosphoadenylyl sulfate = 3,3',5-triiodo-L-thyronine sulfate + adenosine 3',5'-bisphosphate + H(+). It carries out the reaction 3,3',5'-triiodo-L-thyronine + 3'-phosphoadenylyl sulfate = 3,3',5'-triiodo-L-thyronine sulfate + adenosine 3',5'-bisphosphate + H(+). The enzyme catalyses 3,3'-diiodo-L-thyronine + 3'-phosphoadenylyl sulfate = 3,3'-diiodo-L-thyronine sulfate + adenosine 3',5'-bisphosphate + H(+). The catalysed reaction is L-thyroxine + 3'-phosphoadenylyl sulfate = L-thyroxine sulfate + adenosine 3',5'-bisphosphate + H(+). In terms of biological role, sulfotransferase that utilizes 3'-phospho-5'-adenylyl sulfate (PAPS) as sulfonate donor to catalyze the sulfate conjugation of phenolic monoamines (neurotransmitters such as dopamine, (R)-adrenaline/epinephrine, (R)-noradrenaline/norepinephrine and serotonin) and phenolic and catechol drugs. Catalyzes the sulfation of T4 (L-thyroxine/3,5,3',5'-tetraiodothyronine), T3 (3,5,3'-triiodothyronine), rT3 (3,3',5'-triiodothyronine) and 3,3'-T2 (3,3'-diiodothyronine), with a substrate preference of 3,3'-T2 &gt; rT3 &gt; T3 &gt; T4. The polypeptide is Sulfotransferase 1A3 (SULT1A3) (Homo sapiens (Human)).